The sequence spans 245 residues: tRNA pseudouridine synthase A (245 aa).

The active-site Nucleophile is the aspartate 52. Residue tyrosine 111 participates in substrate binding.

The protein belongs to the tRNA pseudouridine synthase TruA family. Homodimer.

The enzyme catalyses uridine(38/39/40) in tRNA = pseudouridine(38/39/40) in tRNA. In terms of biological role, formation of pseudouridine at positions 38, 39 and 40 in the anticodon stem and loop of transfer RNAs. The protein is tRNA pseudouridine synthase A of Thermotoga maritima (strain ATCC 43589 / DSM 3109 / JCM 10099 / NBRC 100826 / MSB8).